The chain runs to 849 residues: Neprilysin-1 (849 aa).

The Cytoplasmic portion of the chain corresponds to 1–113; sequence MSQQHEATAA…LKESQQRRRL (113 aa). Residues 41–61 show a composition bias toward low complexity; that stretch reads QQQVQHQAPHQMQQQQQQQQQ. The interval 41–63 is disordered; the sequence is QQQVQHQAPHQMQQQQQQQQQNK. A helical; Signal-anchor for type II membrane protein transmembrane segment spans residues 114–134; sequence LVLAIAFTVLGAAIGALAIYF. Residues 135 to 849 lie on the Extracellular side of the membrane; it reads ASVHQRCHLY…MNPAEKCSVW (715 aa). The span at 146-155 shows a compositional bias: basic and acidic residues; it reads LEPDNDDRPN. The disordered stretch occupies residues 146–167; the sequence is LEPDNDDRPNGRWNQDSGSAHE. A Peptidase M13 domain is found at 172 to 849; the sequence is ICMTQECVRT…MNPAEKCSVW (678 aa). 5 disulfides stabilise this stretch: C173–C178, C196–C834, C204–C794, C260–C512, and C721–C846. N-linked (GlcNAc...) asparagine glycans are attached at residues N309, N326, N393, N589, and N599. H684 is a binding site for Zn(2+). E685 is a catalytic residue. A Zn(2+)-binding site is contributed by H688. A glycan (N-linked (GlcNAc...) asparagine) is linked at N709. E746 lines the Zn(2+) pocket. D750 serves as the catalytic Proton donor. N-linked (GlcNAc...) asparagine glycosylation occurs at N778.

Belongs to the peptidase M13 family. Requires Zn(2+) as cofactor. In terms of tissue distribution, expressed in the testicular tube, near and in the seminal vesicles. In adults and third-instar larvae, expressed in the midgut and in the mushroom bodies of the brain and neurons in the pars intercerebralis. Also expressed in neurons of the ventral ganglion and imaginal disks (wing and leg) of third-instar larvae. In stage 17 embryos, expressed in the peripheral nervous system, pharynx and midgut.

Its subcellular location is the cell membrane. It catalyses the reaction Preferential cleavage of polypeptides between hydrophobic residues, particularly with Phe or Tyr at P1'.. Its function is as follows. Metalloendoprotease which functions in fertility and memory formation. Required in the dorsal paired medial neurons and alpha/beta mushroom body neurons for the proper formation of long-term and middle-term memories. Required in males to maximise egg-laying in female mates and is also required in females for their fertility. The protein is Neprilysin-1 of Drosophila melanogaster (Fruit fly).